The primary structure comprises 447 residues: Phosphoglucosamine mutase (447 aa).

Residue S88 is the Phosphoserine intermediate of the active site. Mg(2+) is bound by residues S88, D231, D233, and D235. S88 is subject to Phosphoserine.

It belongs to the phosphohexose mutase family. It depends on Mg(2+) as a cofactor. Post-translationally, activated by phosphorylation.

The enzyme catalyses alpha-D-glucosamine 1-phosphate = D-glucosamine 6-phosphate. Catalyzes the conversion of glucosamine-6-phosphate to glucosamine-1-phosphate. The protein is Phosphoglucosamine mutase of Methanococcus maripaludis (strain C5 / ATCC BAA-1333).